The sequence spans 257 residues: UPF0758 protein Bcenmc03_2526 (257 aa).

The tract at residues 1 to 53 (MLSPCPILPSAECRDTADTPADPPGRVIPINRRRRRPGDWRPERPRERLLERG) is disordered. Positions 37–51 (PGDWRPERPRERLLE) are enriched in basic and acidic residues. In terms of domain architecture, MPN spans 135 to 257 (QIDSPGAVED…TFSFARAGWL (123 aa)). Zn(2+) contacts are provided by His-206, His-208, and Asp-219. The JAMM motif motif lies at 206 to 219 (HNHPSGAVQPSAED).

The protein belongs to the UPF0758 family.

The protein is UPF0758 protein Bcenmc03_2526 of Burkholderia orbicola (strain MC0-3).